The sequence spans 66 residues: DNA gyrase inhibitor YacG (66 aa).

Residues Cys9, Cys12, Cys28, and Cys32 each coordinate Zn(2+). Residues 45 to 66 form a disordered region; sequence HKIAGAEESEDELYSGDLEPRH.

It belongs to the DNA gyrase inhibitor YacG family. Interacts with GyrB. It depends on Zn(2+) as a cofactor.

Inhibits all the catalytic activities of DNA gyrase by preventing its interaction with DNA. Acts by binding directly to the C-terminal domain of GyrB, which probably disrupts DNA binding by the gyrase. The chain is DNA gyrase inhibitor YacG from Pseudomonas entomophila (strain L48).